The sequence spans 376 residues: Chaperone protein DnaJ (376 aa).

One can recognise a J domain in the interval aspartate 5–glycine 70. Residues glycine 133 to asparagine 215 form a CR-type zinc finger. The Zn(2+) site is built by cysteine 146, cysteine 149, cysteine 163, cysteine 166, cysteine 189, cysteine 192, cysteine 203, and cysteine 206. CXXCXGXG motif repeat units lie at residues cysteine 146–glycine 153, cysteine 163–glycine 170, cysteine 189–glycine 196, and cysteine 203–glycine 210.

The protein belongs to the DnaJ family. As to quaternary structure, homodimer. Requires Zn(2+) as cofactor.

It localises to the cytoplasm. In terms of biological role, participates actively in the response to hyperosmotic and heat shock by preventing the aggregation of stress-denatured proteins and by disaggregating proteins, also in an autonomous, DnaK-independent fashion. Unfolded proteins bind initially to DnaJ; upon interaction with the DnaJ-bound protein, DnaK hydrolyzes its bound ATP, resulting in the formation of a stable complex. GrpE releases ADP from DnaK; ATP binding to DnaK triggers the release of the substrate protein, thus completing the reaction cycle. Several rounds of ATP-dependent interactions between DnaJ, DnaK and GrpE are required for fully efficient folding. Also involved, together with DnaK and GrpE, in the DNA replication of plasmids through activation of initiation proteins. In Clostridium novyi (strain NT), this protein is Chaperone protein DnaJ.